Consider the following 408-residue polypeptide: Probable pectate lyase 18 (408 aa).

The N-terminal stretch at 1 to 24 (MKMQTKKLFITIVSFLLYAPLFLS) is a signal peptide. N-linked (GlcNAc...) asparagine glycosylation occurs at Asn-42. Residues Asp-206, Asp-230, and Asp-234 each contribute to the Ca(2+) site. Arg-286 is an active-site residue.

This sequence belongs to the polysaccharide lyase 1 family. Ca(2+) serves as cofactor. As to expression, expressed in flowers, but not in leaves.

The catalysed reaction is Eliminative cleavage of (1-&gt;4)-alpha-D-galacturonan to give oligosaccharides with 4-deoxy-alpha-D-galact-4-enuronosyl groups at their non-reducing ends.. It participates in glycan metabolism; pectin degradation; 2-dehydro-3-deoxy-D-gluconate from pectin: step 2/5. In Arabidopsis thaliana (Mouse-ear cress), this protein is Probable pectate lyase 18.